Here is a 57-residue protein sequence, read N- to C-terminus: UPF0391 membrane protein RPB_2024 (57 aa).

2 helical membrane passes run 4 to 24 and 30 to 50; these read WVVTFLVVALIAGLLGFGGIA and IAKVIFFIAIVLFLVSAVVGL.

Belongs to the UPF0391 family.

It localises to the cell membrane. The protein is UPF0391 membrane protein RPB_2024 of Rhodopseudomonas palustris (strain HaA2).